Here is a 166-residue protein sequence, read N- to C-terminus: Probable glucosamine 6-phosphate N-acetyltransferase 2 (166 aa).

An N-acetyltransferase domain is found at 21–166 (VQIRRLEATD…EKGVQMAIYF (146 aa)). Residues S43, 93 to 96 (KFLR), and 105 to 107 (EDV) contribute to the substrate site. 115–120 (GRGLGL) contributes to the acetyl-CoA binding site. 136–137 (YK) is a substrate binding site. 150–152 (YAK) provides a ligand contact to acetyl-CoA.

The protein belongs to the acetyltransferase family. GNA1 subfamily. Homodimer.

The protein localises to the endoplasmic reticulum membrane. It catalyses the reaction D-glucosamine 6-phosphate + acetyl-CoA = N-acetyl-D-glucosamine 6-phosphate + CoA + H(+). It participates in nucleotide-sugar biosynthesis; UDP-N-acetyl-alpha-D-glucosamine biosynthesis; N-acetyl-alpha-D-glucosamine 1-phosphate from alpha-D-glucosamine 6-phosphate (route I): step 1/2. In terms of biological role, acetyltransferase involved in UDP-N-acetylglucosamine (UDP-GlcNAc) biosynthesis. UDP-GlcNAc is an essential metabolite that serves as an initial sugar donor of N-glycan synthesis and thus plays an important role in protein and lipid glycosylation. This Oryza sativa subsp. japonica (Rice) protein is Probable glucosamine 6-phosphate N-acetyltransferase 2.